The chain runs to 362 residues: Putative F-box protein At3g23260 (362 aa).

The F-box domain occupies 1 to 46 (MEWRSLPVELQEEILSRVPAKYLARLRSTSKQWNALSKTGSFAKKH).

In Arabidopsis thaliana (Mouse-ear cress), this protein is Putative F-box protein At3g23260.